Consider the following 591-residue polypeptide: Metalloendopeptidase OPG085 (591 aa).

Position 41 (His-41) interacts with Zn(2+). The active site involves Glu-44. Positions 45 and 112 each coordinate Zn(2+).

Belongs to the peptidase M44 family. The cofactor is Zn(2+). In terms of processing, undergoes proteolytic processing during the course of infection. May be cleaved into 46 kDa and 22 kDa products (Potential).

Its subcellular location is the virion. In terms of biological role, probably involved in maturation of some viral proteins by processing them preferentially at Ala-Gly-|-Ser/Thr/Lys motifs. Does not seem to be responsible for the cleavage of major core proteins. This Monkeypox virus protein is Metalloendopeptidase OPG085 (OPG085).